Reading from the N-terminus, the 69-residue chain is Small integral membrane protein 20 (69 aa).

Residues 1 to 8 (MAAARNLR) lie on the Mitochondrial matrix side of the membrane. Residues 9-29 (TALIFGGFISMVGAAFYPIYF) form a helical membrane-spanning segment. At 30 to 69 (RPLMRLEEYQKEQAVNRAGIVQEDVQPPGLKVWSDPFGRK) the chain is on the mitochondrial intermembrane side. The residue at position 66 (phenylalanine 66) is a Phenylalanine amide.

Component of the MITRAC (mitochondrial translation regulation assembly intermediate of cytochrome c oxidase complex) complex, the core components of this complex being COA3/MITRAC12 and COX14. Interacts with COA3/MITRAC12 and COX4I1. Directly interacts with newly synthesized MT-CO1/COX1. In terms of tissue distribution, highly expressed in the hypothalamus, the spinal cord, and sensory ganglia (at protein level). Also expressed on in the epidermis and dermis layers of the skin (at protein level). Expressed in preadipocytes and adipocytes (at protein level). Expressed in the ovary, specifically in granulosa cells of follicles that have passed the primary stage and in oocytes (at protein level).

It is found in the mitochondrion inner membrane. Its subcellular location is the secreted. Its function is as follows. Component of the MITRAC (mitochondrial translation regulation assembly intermediate of cytochrome c oxidase complex) complex, that regulates cytochrome c oxidase assembly. Promotes the progression of complex assembly after the association of MT-CO1/COX1 with COX4I1 and COX6C. Chaperone-like assembly factor required to stabilize newly synthesized MT-CO1/COX1 and to prevent its premature turnover. In terms of biological role, peptide involved in a broad spectrum of regulatory functions. Is a ligand for GPR173. As part of the reproductive cycle, it regulates gonadotropin-releasing hormone (GnRH) signaling in the hypothalamus and pituitary gland which augments the release of luteinizing hormone. More specifically, it regulates the expression of transcription factors CEBPB and POU2F1/OCT1 through the cAMP-PKA signaling pathway, which subsequently regulate the expression of GNRHR and KISS1. Plays a protective role in memory retention through activation of GNRHR. Regulates the secretion of AVP by hypothalamic neurons. Plays a role in the transduction of the itch sensation. Induces anxiolytic effects, reducing behavior associated with anxiety. Regulates food intake as well as satiation and satiety by increasing Nucb2 expression in neurons. In the ovary, it regulates follicular growth by stimulating granulosa cell proliferation by increasing the expression of GPR173, CREB1, CYP19A1, KITLG, FSHR, and LHCGR. It also increases the production of estradiol (E2). In the heart, it regulates contractility and relaxation by activating the AKT1-NOS3 and MAPK1-MAPK3 signaling pathways. It also plays a cardioprotective role during ischemia, where it activates the SAFE and RISK pathways. Stimulates the proliferation and differentiation of preadipocytes. In pancreatic islet cells, it induces proliferation of islet cells as well as the production of INS through activation of the MAPK1-MAPK3 signaling pathways. This is Small integral membrane protein 20 from Mus musculus (Mouse).